Consider the following 185-residue polypeptide: Large ribosomal subunit protein uL22 (185 aa).

Belongs to the universal ribosomal protein uL22 family. Part of the 50S ribosomal subunit.

Its function is as follows. This protein binds specifically to 23S rRNA. It makes multiple contacts with different domains of the 23S rRNA in the assembled 50S subunit and ribosome. The globular domain of the protein is located near the polypeptide exit tunnel on the outside of the subunit, while an extended beta-hairpin is found that lines the wall of the exit tunnel in the center of the 70S ribosome. This Pyrobaculum aerophilum (strain ATCC 51768 / DSM 7523 / JCM 9630 / CIP 104966 / NBRC 100827 / IM2) protein is Large ribosomal subunit protein uL22.